The sequence spans 668 residues: DNA ligase (668 aa).

NAD(+)-binding positions include 32–36, 81–82, and E110; these read DSEYD and SL. Residue K112 is the N6-AMP-lysine intermediate of the active site. NAD(+) is bound by residues R133, E167, K283, and K307. Zn(2+) is bound by residues C401, C404, C419, and C424. In terms of domain architecture, BRCT spans 586 to 668; sequence QTDSEFNGKT…IQKQKEVENK (83 aa).

Belongs to the NAD-dependent DNA ligase family. LigA subfamily. Mg(2+) serves as cofactor. Mn(2+) is required as a cofactor.

It carries out the reaction NAD(+) + (deoxyribonucleotide)n-3'-hydroxyl + 5'-phospho-(deoxyribonucleotide)m = (deoxyribonucleotide)n+m + AMP + beta-nicotinamide D-nucleotide.. DNA ligase that catalyzes the formation of phosphodiester linkages between 5'-phosphoryl and 3'-hydroxyl groups in double-stranded DNA using NAD as a coenzyme and as the energy source for the reaction. It is essential for DNA replication and repair of damaged DNA. In Staphylococcus carnosus (strain TM300), this protein is DNA ligase.